We begin with the raw amino-acid sequence, 289 residues long: uncharacterized protein (289 aa).

This is an uncharacterized protein from Dictyostelium discoideum (Social amoeba).